Consider the following 464-residue polypeptide: Mannose-1-phosphate guanylyltransferase (464 aa).

It belongs to the mannose-6-phosphate isomerase type 2 family.

The catalysed reaction is alpha-D-mannose 1-phosphate + GTP + H(+) = GDP-alpha-D-mannose + diphosphate. Its pathway is nucleotide-sugar biosynthesis; GDP-alpha-D-mannose biosynthesis; GDP-alpha-D-mannose from alpha-D-mannose 1-phosphate (GTP route): step 1/1. It participates in bacterial outer membrane biogenesis; LPS O-antigen biosynthesis. Involved in GDP-mannose biosynthesis which serves as the activated sugar nucleotide precursor for mannose residues in cell surface polysaccharides. This enzyme participates in synthesis of the LPS O7 antigen. The chain is Mannose-1-phosphate guanylyltransferase (manC) from Escherichia coli.